The sequence spans 232 residues: MNAETIIKMIKDSKKKTPAVCYVSGNLEGLETGTLNFVGGKDFGVIIGDFKEIQDLIARERERITGYHIDIQARNSALPLADLTKYEARIEPGAIIRDLVEIGKGAVIMMGAVINIGAVIGKGTMIDMNAVIGGRAIIGDNCHIGAGAVVAGVIEPPSATPVIIEDNVLVGANAVILEGVRVGANSVVAAGAVVTKDVPSGTVVAGIPAKVIKAFDATTADKTKIVQDLREL.

The protein belongs to the transferase hexapeptide repeat family. DapH subfamily.

It catalyses the reaction (S)-2,3,4,5-tetrahydrodipicolinate + acetyl-CoA + H2O = L-2-acetamido-6-oxoheptanedioate + CoA. The protein operates within amino-acid biosynthesis; L-lysine biosynthesis via DAP pathway; LL-2,6-diaminopimelate from (S)-tetrahydrodipicolinate (acetylase route): step 1/3. Functionally, catalyzes the transfer of an acetyl group from acetyl-CoA to tetrahydrodipicolinate. This Kosmotoga olearia (strain ATCC BAA-1733 / DSM 21960 / TBF 19.5.1) protein is 2,3,4,5-tetrahydropyridine-2,6-dicarboxylate N-acetyltransferase.